Consider the following 364-residue polypeptide: MEASFENGRKRSSSSSSEEESAFSFAMELAAGSVLPMVIKSAIDLNLLELIKRGGEEGASAYELAAQINAENPKAAAEMIDRILQLLAAHSVLTCRVETPPSRRRRYSLAAVCKFLTRDEDGASLAPLSLLVQDRVFMEPWYHLKDVIVEGGVAFERAYGVHAFEYHAKDPKFNKIFNQAMHNQSIIFMKRILEIYKGFEGVKSLVDVGGGTGASSKMIVSKYPLIKAINFDLPHVIQDASPHPEVEHVGGDMFVSVPKADAIFLKWICHDWSDEHCRKLLKNCYDAILGNGKVIIAESTLPEDPNSGPDTIHAIRGDVIMLTVNPGGKERTEKEFRTLALQAGFKRLVKVCAAFHTCIMECHK.

Aspartate 232 contacts S-adenosyl-L-methionine. The active-site Proton acceptor is histidine 270.

Belongs to the class I-like SAM-binding methyltransferase superfamily. Cation-independent O-methyltransferase family. As to quaternary structure, homodimer.

It carries out the reaction quercetin + S-adenosyl-L-methionine = isorhamnetin + S-adenosyl-L-homocysteine + H(+). It catalyses the reaction luteolin + S-adenosyl-L-methionine = chrysoeriol + S-adenosyl-L-homocysteine + H(+). The catalysed reaction is a 3'-hydroxyflavone + S-adenosyl-L-methionine = a 3'-methoxyflavone + S-adenosyl-L-homocysteine + H(+). The enzyme catalyses rhamnetin + S-adenosyl-L-methionine = rhamnacene + S-adenosyl-L-homocysteine + H(+). It carries out the reaction 3',4',7,8-tetrahydroxyflavone + S-adenosyl-L-methionine = 4',7,8-trihydroxy-3'-methoxyflavone-7-olate + S-adenosyl-L-homocysteine + H(+). It catalyses the reaction taxifolin + S-adenosyl-L-methionine = taxifolin 3'-methyl ether + S-adenosyl-L-homocysteine + H(+). It participates in flavonoid metabolism. Functionally, flavonoid 3'-O-methyltransferase involved in the biosynthesis of polymethoxylated flavonoids natural products such as pebrellin, aroma compounds which contribute to the flavor of peppermint, and exhibit pharmacological activities such as anti-allergic, anti-oxidant, antibacterial, anti-proliferative, and anti-inflammatory effects. Catalyzes S-adenosylmethionine-dependent regioselective 3'-O-methylation of flavonoids; active on various hydroxylated flavonoid substrates, including quercetin, rhamnetin, luteolin (LUT), 7,8,3'4'-tetrahydroxy-flavone and taxifolin, and, with a lower efficiency, eupatorin and hesperetin. This Mentha piperita (Peppermint) protein is Flavonoid 3'-O-methyltransferase 3.